We begin with the raw amino-acid sequence, 124 residues long: Fluoride-specific ion channel FluC (124 aa).

The next 4 helical transmembrane spans lie at 5 to 25 (LVVFVGAGLGGALRHGVNLAA), 36 to 56 (TMIINIAGSLAMGLLTGWFAV), 70 to 90 (TGILGGFTTFSTFSLEAFLLM), and 100 to 120 (LYVLGSVAAGIAGVGASLAVI). Residues glycine 74 and threonine 77 each coordinate Na(+).

This sequence belongs to the fluoride channel Fluc/FEX (TC 1.A.43) family.

The protein localises to the cell inner membrane. It carries out the reaction fluoride(in) = fluoride(out). Its activity is regulated as follows. Na(+) is not transported, but it plays an essential structural role and its presence is essential for fluoride channel function. Its function is as follows. Fluoride-specific ion channel. Important for reducing fluoride concentration in the cell, thus reducing its toxicity. This is Fluoride-specific ion channel FluC from Methylobacterium nodulans (strain LMG 21967 / CNCM I-2342 / ORS 2060).